A 188-amino-acid polypeptide reads, in one-letter code: GMP synthase [glutamine-hydrolyzing] subunit A (188 aa).

Residues 2–188 (KVAVIYFGGQ…FKNFIKICRK (187 aa)) enclose the Glutamine amidotransferase type-1 domain. Cys79 serves as the catalytic Nucleophile. Residues His166 and Glu168 contribute to the active site.

In terms of assembly, heterodimer composed of a glutamine amidotransferase subunit (A) and a GMP-binding subunit (B).

It catalyses the reaction XMP + L-glutamine + ATP + H2O = GMP + L-glutamate + AMP + diphosphate + 2 H(+). The protein operates within purine metabolism; GMP biosynthesis; GMP from XMP (L-Gln route): step 1/1. Functionally, catalyzes the synthesis of GMP from XMP. This Sulfolobus acidocaldarius (strain ATCC 33909 / DSM 639 / JCM 8929 / NBRC 15157 / NCIMB 11770) protein is GMP synthase [glutamine-hydrolyzing] subunit A.